Consider the following 57-residue polypeptide: Large ribosomal subunit protein bL32 (57 aa).

Belongs to the bacterial ribosomal protein bL32 family.

The polypeptide is Large ribosomal subunit protein bL32 (Mycolicibacterium gilvum (strain PYR-GCK) (Mycobacterium gilvum (strain PYR-GCK))).